The chain runs to 293 residues: Ribosomal protein L11 methyltransferase (293 aa).

Positions 145, 166, 188, and 230 each coordinate S-adenosyl-L-methionine.

The protein belongs to the methyltransferase superfamily. PrmA family.

Its subcellular location is the cytoplasm. The enzyme catalyses L-lysyl-[protein] + 3 S-adenosyl-L-methionine = N(6),N(6),N(6)-trimethyl-L-lysyl-[protein] + 3 S-adenosyl-L-homocysteine + 3 H(+). Methylates ribosomal protein L11. The sequence is that of Ribosomal protein L11 methyltransferase from Shigella sonnei (strain Ss046).